The chain runs to 309 residues: Probable non-structural 36.3 kDa protein (309 aa).

The chain is Probable non-structural 36.3 kDa protein (S6) from Avena sativa (Oat).